An 858-amino-acid polypeptide reads, in one-letter code: Bifunctional uridylyltransferase/uridylyl-removing enzyme (858 aa).

Residues 1–324 (MSASVAEPPP…PATSGVTRVL (324 aa)) are uridylyltransferase. The uridylyl-removing stretch occupies residues 325–681 (SPGRFVEKQG…ARPSPVGDAL (357 aa)). The HD domain maps to 443 to 565 (VDQHILMVLR…VGSERRLTAL (123 aa)). ACT domains follow at residues 682–761 (QVLV…PEPS) and 790–858 (ILSV…AIAV).

It belongs to the GlnD family. It depends on Mg(2+) as a cofactor.

It carries out the reaction [protein-PII]-L-tyrosine + UTP = [protein-PII]-uridylyl-L-tyrosine + diphosphate. The catalysed reaction is [protein-PII]-uridylyl-L-tyrosine + H2O = [protein-PII]-L-tyrosine + UMP + H(+). Its activity is regulated as follows. Uridylyltransferase (UTase) activity is inhibited by glutamine, while glutamine activates uridylyl-removing (UR) activity. Modifies, by uridylylation and deuridylylation, the PII regulatory proteins (GlnB and homologs), in response to the nitrogen status of the cell that GlnD senses through the glutamine level. Under low glutamine levels, catalyzes the conversion of the PII proteins and UTP to PII-UMP and PPi, while under higher glutamine levels, GlnD hydrolyzes PII-UMP to PII and UMP (deuridylylation). Thus, controls uridylylation state and activity of the PII proteins, and plays an important role in the regulation of nitrogen assimilation and metabolism. The chain is Bifunctional uridylyltransferase/uridylyl-removing enzyme from Burkholderia pseudomallei (strain 1106a).